We begin with the raw amino-acid sequence, 63 residues long: Large ribosomal subunit protein uL29 (63 aa).

The protein belongs to the universal ribosomal protein uL29 family.

This chain is Large ribosomal subunit protein uL29, found in Aliarcobacter butzleri (strain RM4018) (Arcobacter butzleri).